Consider the following 306-residue polypeptide: Tyrosine recombinase XerC (306 aa).

The region spanning Met1–Tyr90 is the Core-binding (CB) domain. Positions Arg111 to Arg298 constitute a Tyr recombinase domain. Active-site residues include Arg151, Lys175, His250, Arg253, and His276. Tyr285 (O-(3'-phospho-DNA)-tyrosine intermediate) is an active-site residue.

Belongs to the 'phage' integrase family. XerC subfamily. Forms a cyclic heterotetrameric complex composed of two molecules of XerC and two molecules of XerD.

It localises to the cytoplasm. Its function is as follows. Site-specific tyrosine recombinase, which acts by catalyzing the cutting and rejoining of the recombining DNA molecules. The XerC-XerD complex is essential to convert dimers of the bacterial chromosome into monomers to permit their segregation at cell division. It also contributes to the segregational stability of plasmids. The polypeptide is Tyrosine recombinase XerC (Pelotomaculum thermopropionicum (strain DSM 13744 / JCM 10971 / SI)).